A 170-amino-acid chain; its full sequence is Cytidine diphosphoramidate kinase (170 aa).

This sequence belongs to the APS kinase family.

The catalysed reaction is cytidine 5'-diphosphoramidate + ATP = cytidine 3'-phospho-5'-diphosphoramidate + ADP + H(+). Its pathway is capsule biogenesis; capsule polysaccharide biosynthesis. In terms of biological role, involved in the biosynthesis of the O-methyl phosphoramidate (MeOPN) group found on the capsular polysaccharide (CPS) of C.jejuni. Catalyzes the ATP-dependent phosphorylation of cytidine diphosphoramidate (CDP-NH(2)) to form cytidine 3'-phosphate 5'-diphosphoramidate. Can also use other substrates such as the corresponding adenine and uridine diphosphoramidate derivatives or cytidine diphosphoramidate analogs, with lower efficiency. This chain is Cytidine diphosphoramidate kinase, found in Campylobacter jejuni subsp. jejuni serotype O:2 (strain ATCC 700819 / NCTC 11168).